Reading from the N-terminus, the 1857-residue chain is Chitin synthase Y (1857 aa).

Residues 1–22 (MVGPSPAGTVPSHAQSSLPSLP) form a disordered region. The 788-residue stretch at 1–788 (MVGPSPAGTV…CWADLAKVGE (788 aa)) folds into the Myosin motor domain. 102-109 (GESGAGKT) contributes to the ATP binding site. A disordered region spans residues 601 to 653 (SSKPLRMPSMARRKASPASRLTFDAPTAEEPEDNESYGGSTAKSSGRRKSAMS). Asn634 carries N-linked (GlcNAc...) asparagine glycosylation. Positions 668-692 (LEIVNKCLSSPSLNPYFIFCLKPND) are actin-binding. Helical transmembrane passes span 898-918 (WMAIVWLLTFYIPDFAIRLFG) and 937-957 (LIIWFSCAVAIFFIVAFPGLV). A Cytochrome b5 heme-binding domain is found at 961-1020 (QHVYSAAELESHNGKNGHDSYIAIRGVVFDLDKFMPRHYPDIVPQSSLKKYAGMDATGLF). Asn1047 and Asn1072 each carry an N-linked (GlcNAc...) asparagine glycan. Residues 1209 to 1229 (FILAISILICAVVIFKFAAAL) form a helical membrane-spanning segment. Asn1572 carries an N-linked (GlcNAc...) asparagine glycan. A run of 3 helical transmembrane segments spans residues 1603 to 1623 (LLSTCIQPVSLAYIIYLIVWL), 1630 to 1650 (IPWTSFVLIAAIYGLQALIFI), and 1657 to 1677 (MIGWMIVYLLAMPIFSVALPF). The DEK-C domain maps to 1799–1854 (LPSDDAILAEIREILRTADLMTVTKKSIKQELERRFGVNLDAKRPYINSATEAVLS).

The protein in the N-terminal section; belongs to the TRAFAC class myosin-kinesin ATPase superfamily. Myosin family. This sequence in the C-terminal section; belongs to the chitin synthase family. Class V subfamily.

The protein resides in the cell membrane. Its subcellular location is the cell septum. It is found in the cell tip. It carries out the reaction [(1-&gt;4)-N-acetyl-beta-D-glucosaminyl](n) + UDP-N-acetyl-alpha-D-glucosamine = [(1-&gt;4)-N-acetyl-beta-D-glucosaminyl](n+1) + UDP + H(+). Functionally, polymerizes chitin, a structural polymer of the cell wall and septum, by transferring the sugar moiety of UDP-GlcNAc to the non-reducing end of the growing chitin polymer. Specifically involved in hyphal elongation and new cell wall formation. The protein is Chitin synthase Y of Aspergillus oryzae (strain ATCC 42149 / RIB 40) (Yellow koji mold).